The chain runs to 194 residues: Protein GrpE (194 aa).

Composition is skewed to basic and acidic residues over residues 1 to 19 and 26 to 44; these read MSKEEFPSEKNLDKEENTS and KKEAAKGEETKKNNENQKL. The segment at 1 to 44 is disordered; it reads MSKEEFPSEKNLDKEENTSKPKKAVKKEAAKGEETKKNNENQKL.

This sequence belongs to the GrpE family. Homodimer.

It localises to the cytoplasm. Its function is as follows. Participates actively in the response to hyperosmotic and heat shock by preventing the aggregation of stress-denatured proteins, in association with DnaK and GrpE. It is the nucleotide exchange factor for DnaK and may function as a thermosensor. Unfolded proteins bind initially to DnaJ; upon interaction with the DnaJ-bound protein, DnaK hydrolyzes its bound ATP, resulting in the formation of a stable complex. GrpE releases ADP from DnaK; ATP binding to DnaK triggers the release of the substrate protein, thus completing the reaction cycle. Several rounds of ATP-dependent interactions between DnaJ, DnaK and GrpE are required for fully efficient folding. The protein is Protein GrpE of Lactobacillus acidophilus (strain ATCC 700396 / NCK56 / N2 / NCFM).